The primary structure comprises 980 residues: NACHT, LRR and PYD domains-containing protein 7 (980 aa).

The Pyrin domain occupies 1–93 (MTSPQLEWTL…CKMAKAEMME (93 aa)). Residues 104-123 (ELGDAEEDSELAKPGEKEGW) form a disordered region. Positions 113–123 (ELAKPGEKEGW) are enriched in basic and acidic residues. The NACHT domain occupies 172 to 491 (YTVVLHGPAG…LEKEEGEDRD (320 aa)). ATP is bound at residue 178–185 (GPAGVGKT). LRR repeat units follow at residues 614 to 638 (CQDLQKLSLQVAKGVFLENYMDFEL), 674 to 697 (NSNLKFLEVKQSFLSDSSVRILCD), 760 to 784 (KCNLQYLRLGGHCATPEQWAEFFYV), 788 to 810 (NQSLKHLRLSANVLLDEGAMLLY), 817 to 840 (KHFLQMLSLENCRLTEASCKDLAA), 845 to 868 (SKKLTHLCLAKNPIGDTGVKFLCE), 874 to 897 (DCKLQTLVLQQCSITKLGCRYLSE), 902 to 928 (ACSLTNLDLSINQIARGLWILCQALEN), and 933 to 957 (LKHLRLKTYETNLEIKKLLEEVKEK).

This sequence belongs to the NLRP family. Directly interacts with CASP1 and IL1B. Expressed in numerous tissues including uterus and ovary, with low levels in heart and brain. Not detected in skeletal muscle.

In terms of biological role, inhibits CASP1/caspase-1-dependent IL1B secretion. The sequence is that of NACHT, LRR and PYD domains-containing protein 7 (NLRP7) from Homo sapiens (Human).